The following is a 206-amino-acid chain: Glycerol-3-phosphate acyltransferase 1 (206 aa).

A run of 5 helical transmembrane segments spans residues 7–27 (LVIG…KIFL), 54–74 (ILTC…VYFI), 81–101 (DLSF…WNHF), 114–134 (IVFF…FLVI), and 155–175 (WINF…IMIF).

It belongs to the PlsY family. Probably interacts with PlsX.

Its subcellular location is the cell membrane. It catalyses the reaction an acyl phosphate + sn-glycerol 3-phosphate = a 1-acyl-sn-glycero-3-phosphate + phosphate. Its pathway is lipid metabolism; phospholipid metabolism. In terms of biological role, catalyzes the transfer of an acyl group from acyl-phosphate (acyl-PO(4)) to glycerol-3-phosphate (G3P) to form lysophosphatidic acid (LPA). This enzyme utilizes acyl-phosphate as fatty acyl donor, but not acyl-CoA or acyl-ACP. The protein is Glycerol-3-phosphate acyltransferase 1 of Lactobacillus johnsonii (strain CNCM I-12250 / La1 / NCC 533).